The primary structure comprises 255 residues: Small ribosomal subunit protein eS1 (255 aa).

A compositionally biased stretch (basic residues) spans 1–18; the sequence is MAVGKNKRLSKGKKGLKK. The disordered stretch occupies residues 1 to 22; it reads MAVGKNKRLSKGKKGLKKRAQD. An N-acetylalanine; partial modification is found at A2.

Belongs to the eukaryotic ribosomal protein eS1 family. As to quaternary structure, component of the small ribosomal subunit. Mature ribosomes consist of a small (40S) and a large (60S) subunit. The 40S subunit contains about 33 different proteins and 1 molecule of RNA (18S). The 60S subunit contains about 49 different proteins and 3 molecules of RNA (25S, 5.8S and 5S).

The protein resides in the cytoplasm. This chain is Small ribosomal subunit protein eS1, found in Uncinocarpus reesii (strain UAMH 1704).